The primary structure comprises 244 residues: 5'-nucleotidase SurE (244 aa).

4 residues coordinate a divalent metal cation: D8, D9, S39, and N96.

Belongs to the SurE nucleotidase family. The cofactor is a divalent metal cation.

The protein resides in the cytoplasm. It catalyses the reaction a ribonucleoside 5'-phosphate + H2O = a ribonucleoside + phosphate. Functionally, nucleotidase that shows phosphatase activity on nucleoside 5'-monophosphates. The chain is 5'-nucleotidase SurE from Thermus thermophilus (strain ATCC 27634 / DSM 579 / HB8).